Here is a 523-residue protein sequence, read N- to C-terminus: NAD(P)H-quinone oxidoreductase subunit 2 (523 aa).

13 consecutive transmembrane segments (helical) span residues 30–50 (VGPE…DLAG), 57–77 (WVPP…ALQW), 94–114 (LAIA…LISW), 128–148 (AAIL…TDLV), 182–202 (LLVG…LYGL), 223–243 (AALA…AVPF), 255–275 (PTPV…ALAL), 291–311 (LLFT…ALAQ), 317–337 (MLAY…VCGT), 345–365 (VLYM…IILF), 389–409 (LGLS…GFFG), 424–444 (VLVV…IGVI), and 477–497 (VALV…NPLF).

This sequence belongs to the complex I subunit 2 family. NDH-1 can be composed of about 15 different subunits; different subcomplexes with different compositions have been identified which probably have different functions.

Its subcellular location is the cellular thylakoid membrane. It carries out the reaction a plastoquinone + NADH + (n+1) H(+)(in) = a plastoquinol + NAD(+) + n H(+)(out). It catalyses the reaction a plastoquinone + NADPH + (n+1) H(+)(in) = a plastoquinol + NADP(+) + n H(+)(out). NDH-1 shuttles electrons from an unknown electron donor, via FMN and iron-sulfur (Fe-S) centers, to quinones in the respiratory and/or the photosynthetic chain. The immediate electron acceptor for the enzyme in this species is believed to be plastoquinone. Couples the redox reaction to proton translocation, and thus conserves the redox energy in a proton gradient. Cyanobacterial NDH-1 also plays a role in inorganic carbon-concentration. This is NAD(P)H-quinone oxidoreductase subunit 2 from Synechococcus sp. (strain CC9311).